A 246-amino-acid chain; its full sequence is Mast cell protease 1 (246 aa).

A signal peptide spans 1 to 18 (MQALLFLMALLLPSGAGA). Residues 19–20 (EE) constitute a propeptide, activation peptide. The Peptidase S1 domain occupies 21 to 244 (IIGGVEARPH…YVPWIKTVIN (224 aa)). C50 and C66 are joined by a disulfide. H65 serves as the catalytic Charge relay system. A glycan (N-linked (GlcNAc...) asparagine) is linked at N102. The active-site Charge relay system is D109. 2 disulfide bridges follow: C143–C208 and C174–C187. The Charge relay system role is filled by S202.

This sequence belongs to the peptidase S1 family. Granzyme subfamily. Mucosal mast cells.

It localises to the secreted. The protein localises to the cytoplasmic granule. Has a chymotrypsin-like activity. In Mus musculus (Mouse), this protein is Mast cell protease 1 (Mcpt1).